We begin with the raw amino-acid sequence, 428 residues long: MFVDQVKIYVKGGDGGNGMVAYRREKYVPKGGPAGGDGGKGADVVFVVEEGLRTLMDFRYQRHFKADRGQHGMSKGQHGRKSEDLLVKVPPGTVVKDEKTGQILADLVTHGQTAVIAKGGRGGRGNSRFATATNPAPEIAENGEPGQERDVILELKVLADVGLVGFPSVGKSTLLSVVSSARPKIAEYHFTTIVPNLGVVETGDNRSFVMADLPGLIEGAHAGVGLGHQFLRHIERTRVIVHVIDMSGLEGRDPYEDYVTINNELKEYNLRLTERPQVVVANKMDMPDAEENLQAFKEKVGEEVKIFPISAVTRQGVRDLLFEVANLIETTPEFPIHEVADESDTSVMYKFDTEGVKFEITRESDGTFVISGYDIEKTFKMTDFSRDESVRRFARQMRGMGIDEALRARGAKDGDIVKILEYEFEFID.

Positions 1–158 (MFVDQVKIYV…RDVILELKVL (158 aa)) constitute an Obg domain. Residues 159–329 (ADVGLVGFPS…LLFEVANLIE (171 aa)) enclose the OBG-type G domain. GTP is bound by residues 165-172 (GFPSVGKS), 190-194 (FTTIV), 212-215 (DLPG), 282-285 (NKMD), and 310-312 (SAV). Ser172 and Thr192 together coordinate Mg(2+). Positions 350 to 428 (KFDTEGVKFE…ILEYEFEFID (79 aa)) constitute an OCT domain.

The protein belongs to the TRAFAC class OBG-HflX-like GTPase superfamily. OBG GTPase family. In terms of assembly, monomer. Mg(2+) serves as cofactor.

It is found in the cytoplasm. Its function is as follows. An essential GTPase which binds GTP, GDP and possibly (p)ppGpp with moderate affinity, with high nucleotide exchange rates and a fairly low GTP hydrolysis rate. Plays a role in control of the cell cycle, stress response, ribosome biogenesis and in those bacteria that undergo differentiation, in morphogenesis control. This Bacillus cereus (strain B4264) protein is GTPase Obg.